The sequence spans 147 residues: Molybdopterin synthase catalytic subunit 1 (147 aa).

Substrate contacts are provided by residues 43–45, 109–110, Lys-125, and 132–134; these read NVR, HR, and KKE.

This sequence belongs to the MoaE family. In terms of assembly, heterotetramer of 2 MoaD subunits and 2 MoaE subunits. Also stable as homodimer. The enzyme changes between these two forms during catalysis.

It catalyses the reaction 2 [molybdopterin-synthase sulfur-carrier protein]-C-terminal-Gly-aminoethanethioate + cyclic pyranopterin phosphate + H2O = molybdopterin + 2 [molybdopterin-synthase sulfur-carrier protein]-C-terminal Gly-Gly + 2 H(+). Its pathway is cofactor biosynthesis; molybdopterin biosynthesis. Its function is as follows. Converts molybdopterin precursor Z into molybdopterin. This requires the incorporation of two sulfur atoms into precursor Z to generate a dithiolene group. The sulfur is provided by MoaD. The polypeptide is Molybdopterin synthase catalytic subunit 1 (moaE1) (Mycobacterium tuberculosis (strain ATCC 25618 / H37Rv)).